The sequence spans 205 residues: Small ribosomal subunit protein uS4B (205 aa).

Positions 94–157 (RRLDNVVFRA…LNLPIVLGTL (64 aa)) constitute an S4 RNA-binding domain.

The protein belongs to the universal ribosomal protein uS4 family. In terms of assembly, part of the 30S ribosomal subunit. Contacts protein S5. The interaction surface between S4 and S5 is involved in control of translational fidelity.

Its function is as follows. One of the primary rRNA binding proteins, it binds directly to 16S rRNA where it nucleates assembly of the body of the 30S subunit. Functionally, with S5 and S12 plays an important role in translational accuracy. The polypeptide is Small ribosomal subunit protein uS4B (Nitrosomonas europaea (strain ATCC 19718 / CIP 103999 / KCTC 2705 / NBRC 14298)).